A 254-amino-acid chain; its full sequence is Trypsin 3A1 (254 aa).

An N-terminal signal peptide occupies residues 1-20 (MNQFLFVSFCALLGLSQVSA). The propeptide at 21-27 (ATLSSGR) is activation peptide. Residues 28-253 (IVGGFQIDIA…VRQWIREVSE (226 aa)) form the Peptidase S1 domain. Cys-53 and Cys-69 form a disulfide bridge. Catalysis depends on charge relay system residues His-68 and Asp-113. 2 disulfides stabilise this stretch: Cys-178-Cys-194 and Cys-205-Cys-229. Residue Ser-209 is the Charge relay system of the active site.

Belongs to the peptidase S1 family. As to expression, midgut.

The protein resides in the secreted. The protein localises to the extracellular space. It catalyses the reaction Preferential cleavage: Arg-|-Xaa, Lys-|-Xaa.. Its function is as follows. Major function may be to aid in digestion of the blood meal. The sequence is that of Trypsin 3A1 from Aedes aegypti (Yellowfever mosquito).